We begin with the raw amino-acid sequence, 298 residues long: RNA exonuclease 4 (298 aa).

Residues 1–73 (MRKTVRKNKQ…EAKLKLKSAT (73 aa)) are a coiled coil. The 151-residue stretch at 125–275 (FFSIDCKIIE…RDTIINVILY (151 aa)) folds into the Exonuclease domain.

Belongs to the REXO4 family.

The protein localises to the nucleus. This is RNA exonuclease 4 (rexo4) from Dictyostelium discoideum (Social amoeba).